The sequence spans 146 residues: uncharacterized protein (146 aa).

This is an uncharacterized protein from Methanothermobacter thermautotrophicus (Methanobacterium thermoformicicum).